Reading from the N-terminus, the 336-residue chain is Abasic site processing protein HMCES (336 aa).

Catalysis depends on cysteine 2, which acts as the Nucleophile. At cysteine 2 the chain carries Thiazolidine linkage to a ring-opened DNA abasic site. Residues 29 to 38 (QPEWLREGRY) show a composition bias toward basic and acidic residues. The segment at 29-52 (QPEWLREGRYRPSYNKGPQSSGPV) is disordered. Residue glutamate 127 is part of the active site. Positions 283 to 336 (LKSSQEGSPQKKEDTLPRWKSQFIHSPSPKKSSAGILRQWLGQEGGPPAKKQKA) are disordered.

Belongs to the SOS response-associated peptidase family.

Its subcellular location is the chromosome. With respect to regulation, formation and reversal of DNA-protein cross-link depends on DNA context. Catalyzes formation of the thiazolidine linkage in presence of abasic sites in single-stranded DNA. Mediates the reversal of the thiazolidine cross-link in presence of double stranded DNA. In terms of biological role, sensor of abasic sites in single-stranded DNA (ssDNA) required to preserve genome integrity by promoting error-free repair of abasic sites. Acts as an enzyme that recognizes and binds abasic sites in ssDNA at replication forks and chemically modifies the lesion by forming a covalent cross-link with DNA: forms a stable thiazolidine linkage between a ring-opened abasic site and the alpha-amino and sulfhydryl substituents of its N-terminal catalytic cysteine residue. The HMCES DNA-protein cross-link is then either reversed or degraded. HMCES is able to catalyze the reversal of its thiazolidine cross-link and cycle between a cross-link and a non-cross-linked state depending on DNA context: mediates self-reversal of the thiazolidine cross-link in double stranded DNA, allowing APEX1 to initiate downstream repair of abasic sites. The HMCES DNA-protein cross-link can also be degraded by the SPRTN metalloprotease following unfolding by the BRIP1/FANCJ helicase. Promotes error-free repair of abasic sites by protecting abasic sites from translesion synthesis (TLS) polymerases and endonucleases that are error-prone and would generate mutations and double-strand breaks. Acts as a protease: mediates autocatalytic processing of its N-terminal methionine in order to expose the catalytic cysteine. The HMCES DNA-protein cross-link is then either reversed or degraded. According to a model, the HMCES DNA-protein cross-link. The sequence is that of Abasic site processing protein HMCES from Gallus gallus (Chicken).